A 540-amino-acid chain; its full sequence is Solute carrier family 2, facilitated glucose transporter member 9 (540 aa).

Residues 1–31 (MARKQNRNSKELGLVPLTDDTSHAGPPGPGR) are disordered. Topologically, residues 1 to 51 (MARKQNRNSKELGLVPLTDDTSHAGPPGPGRALLECDHLRSGVPGGRRRKD) are cytoplasmic. At serine 9 the chain carries Phosphoserine. Residues 52–72 (WSCSLLVASLAGAFGSSFLYG) traverse the membrane as a helical segment. At 73-107 (YNLSVVNAPTPYIKAFYNESWERRHGRPIDPDTLT) the chain is on the extracellular side. Residue asparagine 90 is glycosylated (N-linked (GlcNAc...) asparagine). A helical transmembrane segment spans residues 108–128 (LLWSVTVSIFAIGGLVGTLIV). Over 129 to 140 (KMIGKVLGRKHT) the chain is Cytoplasmic. The chain crosses the membrane as a helical span at residues 141 to 161 (LLANNGFAISAALLMACSLQA). Topologically, residues 162–171 (GAFEMLIVGR) are extracellular. The helical transmembrane segment at 172–192 (FIMGIDGGVALSVLPMYLSEI) threads the bilayer. At 193–200 (SPKEIRGS) the chain is on the cytoplasmic side. A helical transmembrane segment spans residues 201–221 (LGQVTAIFICIGVFTGQLLGL). The Extracellular segment spans residues 222 to 231 (PELLGKESTW). Residues 232–252 (PYLFGVIVVPAVVQLLSLPFL) form a helical membrane-spanning segment. Residues 253–316 (PDSPRYLLLE…LLRAPYVRWQ (64 aa)) lie on the Cytoplasmic side of the membrane. Residues 317-337 (VVTVIVTMACYQLCGLNAIWF) form a helical membrane-spanning segment. Topologically, residues 338 to 354 (YTNSIFGKAGIPPAKIP) are extracellular. A helical membrane pass occupies residues 355–375 (YVTLSTGGIETLAAVFSGLVI). Topologically, residues 376–381 (EHLGRR) are cytoplasmic. The chain crosses the membrane as a helical span at residues 382–402 (PLLIGGFGLMGLFFGTLTITL). At 403 to 415 (TLQDHAPWVPYLS) the chain is on the extracellular side. Residues 416-436 (IVGILAIIASFCSGPGGIPFI) form a helical membrane-spanning segment. Over 437 to 451 (LTGEFFQQSQRPAAF) the chain is Cytoplasmic. Residues 452–472 (IIAGTVNWLSNFAVGLLFPFI) form a helical membrane-spanning segment. Residues 473–478 (QKSLDT) are Extracellular-facing. Residues 479-499 (YCFLVFATICITGAIYLYFVL) traverse the membrane as a helical segment. Residues 500–540 (PETKNRTYAEISQAFSKRNKAYPPEEKIDSAVTDGKINGRP) are Cytoplasmic-facing. Residue serine 515 is modified to Phosphoserine. The disordered stretch occupies residues 519–540 (KAYPPEEKIDSAVTDGKINGRP).

It belongs to the major facilitator superfamily. Sugar transporter (TC 2.A.1.1) family. Glucose transporter subfamily. As to expression, most strongly expressed in basolateral membranes of proximal renal tubular cells, liver and placenta. Also detected in lung, blood leukocytes, heart skeletal muscle and chondrocytes from articular cartilage. Detected in kidney membrane (at protein level). In terms of tissue distribution, only detected in the apical membranes of polarized renal tubular cells and placenta. Detected in kidney membrane (at protein level).

It localises to the cell membrane. Its subcellular location is the basolateral cell membrane. The protein resides in the apical cell membrane. The enzyme catalyses urate(out) = urate(in). With respect to regulation, extracellular glucose and urate accelerate urate efflux. Intracellular urate, glucose and fructose accelerate urate influx. No effect of extracellular urate, glucose or fructose on urate efflux. Intracellular urate and fructose slightly accelerate urate influx. Functionally, high-capacity urate transporter, which may play a role in the urate reabsorption by proximal tubules. May have a residual high-affinity, low-capacity glucose and fructose transporter activity. Transports urate at rates 45- to 60-fold faster than glucose. Does not transport galactose. May mediate small uptake of adenine but not of other nucleobases. This is Solute carrier family 2, facilitated glucose transporter member 9 from Homo sapiens (Human).